The primary structure comprises 130 residues: Protein ApaG (130 aa).

The ApaG domain maps to 3–127 (RAVTRHIEVT…FSLDSPDGKR (125 aa)).

In Bradyrhizobium sp. (strain ORS 278), this protein is Protein ApaG.